Reading from the N-terminus, the 557-residue chain is Formate--tetrahydrofolate ligase (557 aa).

Residue 65 to 72 participates in ATP binding; that stretch reads TPAGEGKT.

It belongs to the formate--tetrahydrofolate ligase family.

It catalyses the reaction (6S)-5,6,7,8-tetrahydrofolate + formate + ATP = (6R)-10-formyltetrahydrofolate + ADP + phosphate. It participates in one-carbon metabolism; tetrahydrofolate interconversion. In Methylococcus capsulatus (strain ATCC 33009 / NCIMB 11132 / Bath), this protein is Formate--tetrahydrofolate ligase.